The following is a 752-amino-acid chain: MAEPRQEFDTMEDQAGDYTMLQDQEGDMDHGLKESPPQPPADDGSEEPGSETSDAKSTPTAEDVTAPLVEERAPDKQATAQSHTEIPEGTTAEEAGIGDTPNMEDQAAGHVTQEPQKVEIFSQSLLVEPGRREGQAPDSGISDWTHQQVPSMSGAPLPPQGLREATHQPLGTRPEDVERSHPASELLWQESPQKEAWGKDRLGSEEEVDEDITMDESSQESPPSQASLAPGTATPQARSVSASGVSGETTSIPGFPAEGSIPLPADFFSKVSAETQASPPEGPGTGPSEEGHEAAPEFTFHVEIKASAPKEQDLEGATVVGAPAEEQKARGPSVGKGTKEASLLEPTDKQPAAGLPGRPVSRVPQLKARVAGVSKDRTGNDEKKAKTSTPSCAKTPSNRPCLSPTRPTPGSSDPLIKPSSPAVCPEPATSPKYVSSVTPRNGSPGTKQMKLKGADGKTGAKIATPRGAATPGQKGTSNATRIPAKTTPSPKTPPGSGEPPKSGERSGYSSPGSPGTPGSRSRTPSLPTPPTREPKKVAVVRTPPKSPSASKSRLQTAPVPMPDLKNVRSKIGSTENLKHQPGGGKVQIINKKLDLSNVQSKCGSKDNIKHVPGGGSVHIVYKPVDLSKVTSKCGSLGNIHHKPGGGQVEVKSEKLDFKDRVQSKIGSLDNITHVPGGGNKKIETHKLTFRENAKAKTDHGAEIVYKSPVVSGDTSPRHLSNVSSTGSIDMVDSPQLATLADEVSASLAKQGL.

Positions 1 to 567 are disordered; it reads MAEPRQEFDT…PVPMPDLKNV (567 aa). Ala-2 carries the N-acetylalanine modification. Phosphotyrosine is present on Tyr-18. Lys-33 participates in a covalent cross-link: Glycyl lysine isopeptide (Lys-Gly) (interchain with G-Cter in ubiquitin). Ser-35 and Ser-50 each carry phosphoserine. Residues 50-60 are compositionally biased toward polar residues; sequence SETSDAKSTPT. Phosphothreonine occurs at positions 58, 60, and 100. Polar residues predominate over residues 142–151; that stretch reads SDWTHQQVPS. Residues 173–182 show a composition bias toward basic and acidic residues; that stretch reads RPEDVERSHP. Residues Ser-191 and Ser-204 each carry the phosphoserine modification. A compositionally biased stretch (basic and acidic residues) spans 192 to 204; sequence PQKEAWGKDRLGS. Acidic residues predominate over residues 205–218; it reads EEEVDEDITMDESS. Over residues 219-229 the composition is skewed to low complexity; the sequence is QESPPSQASLA. A compositionally biased stretch (polar residues) spans 233-252; it reads ATPQARSVSASGVSGETTSI. Basic and acidic residues-rich tracts occupy residues 289–313 and 374–385; these read EEGH…KEQD and SKDRTGNDEKKA. Composition is skewed to polar residues over residues 387–400 and 432–446; these read TSTP…SNRP and KYVS…SPGT. Thr-464 is subject to Phosphothreonine. Arg-466 bears the Omega-N-methylarginine mark. Lys-474 is subject to N6,N6-dimethyllysine; alternate. At Lys-474 the chain carries N6-acetyllysine; alternate. 3 positions are modified to phosphothreonine: Thr-480, Thr-486, and Thr-487. Ser-489 is modified (phosphoserine). The residue at position 492 (Thr-492) is a Phosphothreonine. Phosphoserine is present on residues Ser-496, Ser-502, and Ser-506. Residues 498-525 are compositionally biased toward low complexity; it reads EPPKSGERSGYSSPGSPGTPGSRSRTPS. Tyr-508 is subject to Phosphotyrosine. 2 positions are modified to phosphoserine: Ser-509 and Ser-510. The residue at position 513 (Ser-513) is a Phosphoserine; by CK1, PDPK1 and TTBK1. Residues Thr-516 and Thr-523 each carry the phosphothreonine modification. Phosphoserine is present on Ser-525. Residue Thr-528 is modified to Phosphothreonine. Position 536 is an N6-acetyllysine (Lys-536). Position 542 is a phosphothreonine (Thr-542). Phosphoserine is present on residues Ser-546 and Ser-548. Tau/MAP repeat units follow at residues 555–585, 586–616, 617–647, and 648–679; these read QTAP…GGGK, VQII…GGGS, VHIV…GGGQ, and VEVK…GGGN. Lys-565 participates in a covalent cross-link: Glycyl lysine isopeptide (Lys-Gly) (interchain with G-Cter in ubiquitin). Position 570 is an N6-acetyllysine; alternate (Lys-570). The residue at position 570 (Lys-570) is an N6-methyllysine; alternate. A Glycyl lysine isopeptide (Lys-Gly) (interchain with G-Cter in ubiquitin); alternate cross-link involves residue Lys-570. Ser-573 is subject to Phosphoserine. Residue Lys-578 forms a Glycyl lysine isopeptide (Lys-Gly) (interchain with G-Cter in ubiquitin) linkage. Lys-592 is subject to N6-acetyllysine; alternate. A Glycyl lysine isopeptide (Lys-Gly) (interchain with G-Cter in ubiquitin); alternate cross-link involves residue Lys-592. Phosphoserine occurs at positions 596 and 600. N6-acetyllysine is present on Lys-601. A disulfide bridge links Cys-602 with Cys-633. Residue Ser-604 is modified to Phosphoserine. Lys-609 is modified (N6-acetyllysine; alternate). A Glycyl lysine isopeptide (Lys-Gly) (interchain with G-Cter in ubiquitin); alternate cross-link involves residue Lys-609. Residue Ser-616 is modified to Phosphoserine. At Lys-622 the chain carries N6,N6-dimethyllysine; alternate. An N6-acetyllysine; alternate mark is found at Lys-622, Lys-628, and Lys-632. Residues Lys-622, Lys-628, and Lys-632 each participate in a glycyl lysine isopeptide (Lys-Gly) (interchain with G-Cter in ubiquitin); alternate cross-link. At Ser-635 the chain carries Phosphoserine. N6-acetyllysine; alternate occurs at positions 642, 654, and 658. Residues Lys-642, Lys-654, and Lys-658 each participate in a glycyl lysine isopeptide (Lys-Gly) (interchain with G-Cter in ubiquitin); alternate cross-link. Arg-660 is modified (omega-N-methylarginine). Ser-663 is subject to Phosphoserine. A Glycyl lysine isopeptide (Lys-Gly) (interchain with G-Cter in ubiquitin) cross-link involves residue Lys-664. At Ser-667 the chain carries Phosphoserine. Lys-680 bears the N6-acetyllysine; alternate mark. Lys-680 participates in a covalent cross-link: Glycyl lysine isopeptide (Lys-Gly) (interchain with G-Cter in ubiquitin); alternate. Lys-686 participates in a covalent cross-link: Glycyl lysine isopeptide (Lys-Gly) (interchain with G-Cter in ubiquitin). N6-acetyllysine; alternate is present on Lys-696. Lys-696 participates in a covalent cross-link: Glycyl lysine isopeptide (Lys-Gly) (interchain with G-Cter in ubiquitin); alternate. Tyr-705 carries the post-translational modification Phosphotyrosine. Ser-707 is subject to Phosphoserine; by CK1 and PDPK1. Ser-711 carries the post-translational modification Phosphoserine. A Phosphothreonine modification is found at Thr-714. At Ser-715 the chain carries Phosphoserine; by CK1 and PDPK1. Phosphoserine is present on residues Ser-720, Ser-727, and Ser-733. Thr-738 is modified (phosphothreonine).

Interacts with MARK1, MARK2, MARK3 and MARK4. Interacts with SQSTM1 when polyubiquitinated. Interacts with PSMC2 through SQSTM1. Interacts with FKBP4. Binds to CSNK1D. Interacts with SGK1. Interacts with EPM2A; the interaction dephosphorylates MAPT at Ser-388. Interacts with PIN1. Interacts with LRRK2. Interacts with LRP1, leading to endocytosis; this interaction is reduced in the presence of LRPAP1/RAP. Post-translationally, polyubiquitinated. Requires functional TRAF6 and may provoke SQSTM1-dependent degradation by the proteasome. In terms of processing, phosphorylated at various serine and threonine residues in S-P or T-P motifs by proline-directed protein kinases (PDPK1, CDK1, CDK5, GSK3, MAPK) (a few sites per protein in interphase, more in mitosis), and at serine residues in K-X-G-S motifs by MAP/microtubule affinity-regulating kinase (MARK1, MARK2, MARK3, MARK4), causing detachment from microtubules, and their disassembly. Fetal Tau is much more phosphorylated than adult Tau. Phosphorylation at Ser-573 by BRSK1 and BRSK2 in neurons affects ability to bind microtubules and plays a role in neuron polarization. Phosphorylated by PHK. Dephosphorylation at several serine and threonine residues by the serine/threonine phosphatase PPP5C. Phosphorylation at Ser-204 by SGK1 mediates microtubule depolymerization and neurite formation in hippocampal neurons. Expressed in neurons. The larger forms (isoform tau-A and isoform tau-B) are preferentially expressed in the peripheral nervous system while the other are expressed in the central nervous system. Low amounts of the larger forms are also found in limited areas of the CNS.

The protein resides in the cytoplasm. It is found in the cytosol. Its subcellular location is the cell membrane. It localises to the cytoskeleton. The protein localises to the cell projection. The protein resides in the axon. It is found in the dendrite. Its subcellular location is the secreted. Functionally, promotes microtubule assembly and stability, and might be involved in the establishment and maintenance of neuronal polarity. The C-terminus binds axonal microtubules while the N-terminus binds neural plasma membrane components, suggesting that tau functions as a linker protein between both. Axonal polarity is predetermined by tau localization (in the neuronal cell) in the domain of the cell body defined by the centrosome. The short isoforms allow plasticity of the cytoskeleton whereas the longer isoforms may preferentially play a role in its stabilization. This chain is Microtubule-associated protein tau, found in Rattus norvegicus (Rat).